Reading from the N-terminus, the 1462-residue chain is MPNIFLSNYIFIFILLTNKFLKTFDYVESKHWNNICLKDLYDKNDIKLNKTNKLKLKYKNFMFSDLKKQKKRKETETATGTITQKQKHTKKKKLHGQTNGYFIKRNKIQHIFANIPYNNNFKKINQDIYTFKNVNYHPKNANKKVYLKINNATHLETIKTYITKCIKNYRHQNEEKTQKKIRNYNNIIQYYVSRKNNNNNNNNRFIHTYNMLFINIFYNIISKNRNEKKKKNRKTDFQKYLRKYEELYQKFTPENDAENNDINNDKNNSDLISQINKKNISNIIINEWCLRNNNEKYNSTLMYDYISNMHNTEYQDITCVNNFIKNNEMIEKETWEHKQKPYLTYKYEFKYRDPINRKNKLYQYEYYIPKLITYEEDISTEPKFVPSNFKSPKCYNNSPVNALTTSGFSSRNIDTFGKERNKIYSFNTPTDVKRNIFFDDLILISSSYNQHFFPNLNFLLNLHTLQILIRDKTAIETDYMIDKFDQLKEKLIQINSPHVIDNNQNDDIDNNNNNNNNNNNCDNPYNKRIIPINNKSTNNDACTIDNISNIQHRKNQTNDQNNKSKDDEINEEISSNLTYKKTLFDDKIQLFKNKYDKNILDDKDFVQLWKYNEKGEIVETINKIPIPKIYLNIDDPKYLSWKILQNSGKTAFKEIPTPNRKLEAWRQQVNLKTFYKQNFDSSISLRNISKEELVDYKMKIVDNTFEKNEKVQNDISDHFDNIKMDNQQNEEKVELNENINYYNSDNINGDNINGDNINGDNINGDNINGDNINGDNINGDNINGDNINGDNINGDNINGDNINDDNINDDNINDVNNNHNNNHNSDNHYYYGDTHKINNQNKKNVNETINISENTNMDDNNNNEIYSQNYKEQRIKNQDISNNAYNFNKEHIDKCKRKYKKAFYTLVVRDGIVDEYLSDDINILKNLDNKLKKKSEINQNKENENENENNSQSDNNTTKQHIQDEQGTEQKKSKIFVGSFFNVKDVEIEYLINKELYFIPEHSNWYKTNTQPFIRGQIGKQSRKFDNDYPIYDYRKSDFGMAKFSSLNLASIKDCAVVYLDENIDLSDKFIHVIFIATSKNEDIDNNNNNNDNNNDNDIYEKQSKYNVYENIPSNNKQTNSNNNSEYNNEQNNCSNKQITNDEQNDNEYEKEESIQKCHMEKVISSHDDTIQNCDIEKNECKENKKSKYTQIKLTEYHTHNPITNPRLVVYVKGNSKINIYESHISLNKSNSGLVNGFSRICLEEKSNVKHTLSQELGNNVWHFHNVSVKNGLNANYKFVDVLLGSLSSRINLQIEGEKGCKQESYGLSLLEDKQNISQYEMFHHEHPSMETNQLFKCLVSDKAHAVWRSRGRIERNAIKAKLNTLCKSILLNFGASAVCIPTLEIIPSDIECANHGATISDLEKEPIFSLMTRGISERNAREIMMNSFVKEILDHISDENLKNRVYQKVLKFSQKYKSSTY.

3 disordered regions span residues Ile-500 to Tyr-525, Asn-938 to Gln-970, and Asn-1111 to Glu-1153. A compositionally biased stretch (low complexity) spans Asn-510–Asn-523. The span at His-961 to Gln-970 shows a compositional bias: basic and acidic residues. The segment covering Asn-1111–Asn-1136 has biased composition (low complexity).

Belongs to the iron-sulfur cluster assembly SufBD family. Component of a complex composed of SufB, SufC and SufD in a stoichiometric ratio of 1:2:1. Interacts with SufB. Interacts with SufC; the interaction enhances the ATPase activity of SufC. Proteolytically cleaved.

The protein localises to the plastid. It localises to the apicoplast. It functions in the pathway cofactor biosynthesis; iron-sulfur cluster biosynthesis. Functionally, participates in the sulfur mobilization (SUF) pathway for iron-sulfur (Fe-S) cluster biogenesis. As part of a complex consisting of SufB-SufC(2)-SufD, involved in assembly of [4Fe-4S] clusters. Enhances the ATPase activity of SufC. The sequence is that of Iron-sulfur cluster assembly protein SufD from Plasmodium falciparum (isolate 3D7).